A 229-amino-acid polypeptide reads, in one-letter code: uncharacterized protein (229 aa).

Residues 61-229 (MQAEDKVSKP…TESEDKPKRG (169 aa)) are disordered. Residues 109–128 (QQEKQQPEKAVVEQQEKQQP) show a composition bias toward basic and acidic residues. The segment covering 166–194 (QPEQPERQQQAQPERQQQAQPERQQQAQP) has biased composition (low complexity). A compositionally biased stretch (acidic residues) spans 195–204 (EEAEDAEQEP). Residues 218-229 (TQTESEDKPKRG) show a composition bias toward basic and acidic residues.

This is an uncharacterized protein from Frog virus 3 (isolate Goorha) (FV-3).